Consider the following 259-residue polypeptide: 4-hydroxy-tetrahydrodipicolinate reductase (259 aa).

Residues 9–14 and glutamate 35 each bind NAD(+); that span reads GAGGRM. Arginine 36 is a binding site for NADP(+). Residues 92 to 94 and 116 to 119 contribute to the NAD(+) site; these read GTT and APNM. Residue histidine 149 is the Proton donor/acceptor of the active site. Histidine 150 serves as a coordination point for (S)-2,3,4,5-tetrahydrodipicolinate. The Proton donor role is filled by lysine 153. Residue 159–160 participates in (S)-2,3,4,5-tetrahydrodipicolinate binding; sequence GT.

This sequence belongs to the DapB family.

It localises to the cytoplasm. The enzyme catalyses (S)-2,3,4,5-tetrahydrodipicolinate + NAD(+) + H2O = (2S,4S)-4-hydroxy-2,3,4,5-tetrahydrodipicolinate + NADH + H(+). The catalysed reaction is (S)-2,3,4,5-tetrahydrodipicolinate + NADP(+) + H2O = (2S,4S)-4-hydroxy-2,3,4,5-tetrahydrodipicolinate + NADPH + H(+). The protein operates within amino-acid biosynthesis; L-lysine biosynthesis via DAP pathway; (S)-tetrahydrodipicolinate from L-aspartate: step 4/4. Functionally, catalyzes the conversion of 4-hydroxy-tetrahydrodipicolinate (HTPA) to tetrahydrodipicolinate. The sequence is that of 4-hydroxy-tetrahydrodipicolinate reductase from Nitratidesulfovibrio vulgaris (strain DSM 19637 / Miyazaki F) (Desulfovibrio vulgaris).